A 544-amino-acid polypeptide reads, in one-letter code: Membrane protein insertase YidC (544 aa).

5 consecutive transmembrane segments (helical) span residues 6-26, 343-363, 418-438, 456-476, and 497-517; these read NLLLIALLFVTFMLWQAWETD, KFLHGFIGNWGFSIIAITFIV, LGGCLPLVIQMPIFLALYYML, LSAQDPYYILPILMGVTMFFI, and PVIFTVFFLWFPSGLVMYYIV.

The protein belongs to the OXA1/ALB3/YidC family. Type 1 subfamily. Interacts with the Sec translocase complex via SecD. Specifically interacts with transmembrane segments of nascent integral membrane proteins during membrane integration.

The protein resides in the cell inner membrane. Required for the insertion and/or proper folding and/or complex formation of integral membrane proteins into the membrane. Involved in integration of membrane proteins that insert both dependently and independently of the Sec translocase complex, as well as at least some lipoproteins. Aids folding of multispanning membrane proteins. In Pectobacterium atrosepticum (strain SCRI 1043 / ATCC BAA-672) (Erwinia carotovora subsp. atroseptica), this protein is Membrane protein insertase YidC.